We begin with the raw amino-acid sequence, 277 residues long: Putative hydro-lyase SCO1412 (277 aa).

The protein belongs to the D-glutamate cyclase family.

This chain is Putative hydro-lyase SCO1412, found in Streptomyces coelicolor (strain ATCC BAA-471 / A3(2) / M145).